The following is a 207-amino-acid chain: Thymidylate kinase (207 aa).

7–14 serves as a coordination point for ATP; it reads GCEGTGKT.

It belongs to the thymidylate kinase family.

The catalysed reaction is dTMP + ATP = dTDP + ADP. Its function is as follows. Phosphorylation of dTMP to form dTDP in both de novo and salvage pathways of dTTP synthesis. The sequence is that of Thymidylate kinase from Aster yellows witches'-broom phytoplasma (strain AYWB).